Here is a 697-residue protein sequence, read N- to C-terminus: Portal protein (697 aa).

Positions 633–697 are disordered; the sequence is MSREAAGGVP…RRAGGPYGFH (65 aa). A compositionally biased stretch (basic and acidic residues) spans 664-689; the sequence is ITADEERRGPERVGRFRNGGPDDPRR.

It belongs to the herpesviridae portal protein family. As to quaternary structure, homododecamerizes. Interacts with terminase subunits TRM1 and TRM3.

The protein localises to the virion. It localises to the host nucleus. Forms a portal in the viral capsid through which viral DNA is translocated during DNA packaging. Assembles as a dodecamer at a single fivefold axe of the T=16 icosahedric capsid. Binds to the molecular motor that translocates the viral DNA, termed terminase. The sequence is that of Portal protein (UL104) from Homo sapiens (Human).